The sequence spans 64 residues: Large ribosomal subunit protein uL30 (64 aa).

It belongs to the universal ribosomal protein uL30 family. As to quaternary structure, part of the 50S ribosomal subunit.

In Rhodopseudomonas palustris (strain HaA2), this protein is Large ribosomal subunit protein uL30.